The sequence spans 276 residues: N-alpha-acetyltransferase 60 (276 aa).

The N-acetyltransferase domain occupies 34–239 (VQLRFLVPDD…WTLLDHIKHY (206 aa)). Tyr-59 lines the substrate pocket. The active site involves Tyr-139. Leu-141 serves as a coordination point for substrate. Residues 143–145 (LGV) and 151–156 (RNGIGS) each bind acetyl-CoA. Residue His-180 is part of the active site. Acetyl-CoA is bound by residues Asn-185 and 192-195 (YEKR). The tract at residues 204-215 (PYYYNIRGKGKD) is required for homodimerization. Residue Tyr-207 coordinates substrate.

This sequence belongs to the acetyltransferase family. NAA60 subfamily.

It catalyses the reaction N-terminal L-methionyl-[transmembrane protein] + acetyl-CoA = N-terminal N(alpha)-acetyl-L-methionyl-[transmembrane protein] + CoA + H(+). It carries out the reaction L-lysyl-[protein] + acetyl-CoA = N(6)-acetyl-L-lysyl-[protein] + CoA + H(+). Its function is as follows. Displays alpha (N-terminal) acetyltransferase activity towards a range of N-terminal sequences including those starting with Met-Lys, Met-Val, Met-Ala and Met-Met. Required for normal chromosomal segregation during anaphase. In terms of biological role, shows histone acetyltransferase activity toward free histones. Functionally, does not show histone acetyltransferase activity toward free histones. The protein is N-alpha-acetyltransferase 60 of Drosophila melanogaster (Fruit fly).